A 485-amino-acid polypeptide reads, in one-letter code: Portal protein (485 aa).

The segment at 456-485 (MVDADPTVPGSPNPTPAPKPQPAIEGGDSA) is disordered. The segment covering 464–476 (PGSPNPTPAPKPQ) has biased composition (pro residues).

Belongs to the SPP1-like portal protein family. As to quaternary structure, homododecamer.

It localises to the virion. Forms the portal vertex of the capsid. This portal plays critical roles in head assembly, genome packaging, neck/tail attachment, and genome ejection. The portal protein multimerizes as a single ring-shaped homododecamer arranged around a central channel. Binds to the terminase subunits to form the packaging machine. The sequence is that of Portal protein (14) from Mycobacterium (Mycobacteriophage D29).